We begin with the raw amino-acid sequence, 1120 residues long: Putative GTPase-activating protein AN11010 (1120 aa).

A Rab-GAP TBC domain is found at 291 to 479 (GLPNRLRGEI…RVLDVFFLEG (189 aa)). Disordered stretches follow at residues 673–702 (DSPG…PSPA), 859–903 (DEVK…PNNP), 960–979 (AAKQ…SGGI), 1017–1068 (RNAL…ETDR), and 1081–1120 (GKDD…EFES). Residues 864–878 (ESTPSPEGETPGTPS) show a composition bias toward low complexity. The segment covering 960–970 (AAKQQPTSSGP) has biased composition (polar residues). Residues 1023 to 1032 (DDDDEDDEDD) are compositionally biased toward acidic residues. Basic and acidic residues-rich tracts occupy residues 1057–1068 (DPERRSVRETDR) and 1081–1095 (GKDD…DSHQ).

In Emericella nidulans (strain FGSC A4 / ATCC 38163 / CBS 112.46 / NRRL 194 / M139) (Aspergillus nidulans), this protein is Putative GTPase-activating protein AN11010.